We begin with the raw amino-acid sequence, 304 residues long: Cyclin-dependent kinase 3 (304 aa).

In terms of domain architecture, Protein kinase spans 4–286 (FQKVEKIGEG…AKTALAHPYF (283 aa)). ATP is bound by residues 10-18 (IGEGTYGVV) and Lys-33. The active-site Proton acceptor is the Asp-127.

The protein belongs to the protein kinase superfamily. CMGC Ser/Thr protein kinase family. CDC2/CDKX subfamily. In terms of assembly, interacts with CABLES1 and ATF1. Binding to CCNC/cyclin-C promotes RB1 phosphorylation. Binds to CABLES2.

It catalyses the reaction L-seryl-[protein] + ATP = O-phospho-L-seryl-[protein] + ADP + H(+). The enzyme catalyses L-threonyl-[protein] + ATP = O-phospho-L-threonyl-[protein] + ADP + H(+). Its function is as follows. Serine/threonine-protein kinase that plays a critical role in the control of the eukaryotic cell cycle; involved in G0-G1 and G1-S cell cycle transitions. Interacts with CCNC/cyclin-C during interphase. Phosphorylates histone H1, ATF1, RB1 and CABLES1. ATF1 phosphorylation triggers ATF1 transactivation and transcriptional activities, and promotes cell proliferation and transformation. CDK3/cyclin-C mediated RB1 phosphorylation is required for G0-G1 transition. Promotes G1-S transition probably by contributing to the activation of E2F1, E2F2 and E2F3 in a RB1-independent manner. The sequence is that of Cyclin-dependent kinase 3 (Cdk3) from Mus musculus (Mouse).